The chain runs to 741 residues: Transketolase, chloroplastic (741 aa).

Low complexity predominate over residues 1–19 (MAASSSLSTLSHHQTLLSH). The tract at residues 1–33 (MAASSSLSTLSHHQTLLSHPKTHLPTTPASSLL) is disordered. The N-terminal 66 residues, 1 to 66 (MAASSSLSTL…VGSASAVVRA (66 aa)), are a transit peptide targeting the chloroplast. Residues 24–33 (LPTTPASSLL) are compositionally biased toward polar residues. His-103 serves as a coordination point for substrate. Residues His-143 and 192 to 194 (GPL) each bind thiamine diphosphate. Residue Asp-233 participates in Mg(2+) binding. Thiamine diphosphate is bound by residues Gly-234 and Asn-263. Mg(2+) contacts are provided by Asn-263 and Ile-265. Positions 340, 434, and 461 each coordinate substrate. His-340 provides a ligand contact to thiamine diphosphate. Glu-488 and Phe-515 together coordinate thiamine diphosphate. The Proton donor role is filled by Glu-488. The substrate site is built by His-539, Asp-547, and Arg-598.

It belongs to the transketolase family. Homodimer. Requires Mg(2+) as cofactor. Ca(2+) serves as cofactor. Mn(2+) is required as a cofactor. It depends on Co(2+) as a cofactor. The cofactor is thiamine diphosphate.

It is found in the plastid. The protein localises to the chloroplast thylakoid membrane. It catalyses the reaction D-sedoheptulose 7-phosphate + D-glyceraldehyde 3-phosphate = aldehydo-D-ribose 5-phosphate + D-xylulose 5-phosphate. Its pathway is carbohydrate biosynthesis; Calvin cycle. Functionally, catalyzes the reversible transfer of a two-carbon ketol group from fructose-6-phosphate or sedoheptulose-7-phosphate to glyceraldehyde-3-phosphate to yield xylulose-5-phosphate and erythrose-4-phosphate or ribose-5-phosphate, respectively. In Spinacia oleracea (Spinach), this protein is Transketolase, chloroplastic.